A 166-amino-acid chain; its full sequence is Lipoprotein signal peptidase (166 aa).

Transmembrane regions (helical) follow at residues 9–29 (ASGALAPWLGISLIVILFDQL), 45–65 (ALTSFFSLVLVYNRGAAFGFL), 71–91 (WQRWAFTALGIGATLVICFLL), and 100–120 (FSLSLALILGGALGNVIDRLV). Active-site residues include Asp-126 and Asp-144. A helical membrane pass occupies residues 135-155 (WHFPAFNLADSAITIGAVLLV).

The protein belongs to the peptidase A8 family.

It is found in the cell inner membrane. It carries out the reaction Release of signal peptides from bacterial membrane prolipoproteins. Hydrolyzes -Xaa-Yaa-Zaa-|-(S,diacylglyceryl)Cys-, in which Xaa is hydrophobic (preferably Leu), and Yaa (Ala or Ser) and Zaa (Gly or Ala) have small, neutral side chains.. The protein operates within protein modification; lipoprotein biosynthesis (signal peptide cleavage). Functionally, this protein specifically catalyzes the removal of signal peptides from prolipoproteins. This chain is Lipoprotein signal peptidase, found in Burkholderia ambifaria (strain ATCC BAA-244 / DSM 16087 / CCUG 44356 / LMG 19182 / AMMD) (Burkholderia cepacia (strain AMMD)).